The chain runs to 311 residues: Glycine--tRNA ligase alpha subunit (311 aa).

This sequence belongs to the class-II aminoacyl-tRNA synthetase family. Tetramer of two alpha and two beta subunits.

It localises to the cytoplasm. It carries out the reaction tRNA(Gly) + glycine + ATP = glycyl-tRNA(Gly) + AMP + diphosphate. The sequence is that of Glycine--tRNA ligase alpha subunit from Brucella anthropi (strain ATCC 49188 / DSM 6882 / CCUG 24695 / JCM 21032 / LMG 3331 / NBRC 15819 / NCTC 12168 / Alc 37) (Ochrobactrum anthropi).